Here is a 383-residue protein sequence, read N- to C-terminus: Glutamate 5-kinase (383 aa).

Lys17 contributes to the ATP binding site. Residues Ser64, Asp151, and Asn165 each contribute to the substrate site. 185 to 186 (SD) is an ATP binding site. Residues 291–367 (SGTIRVDAGA…DEIEGILGYN (77 aa)) enclose the PUA domain.

Belongs to the glutamate 5-kinase family.

Its subcellular location is the cytoplasm. The catalysed reaction is L-glutamate + ATP = L-glutamyl 5-phosphate + ADP. The protein operates within amino-acid biosynthesis; L-proline biosynthesis; L-glutamate 5-semialdehyde from L-glutamate: step 1/2. Its function is as follows. Catalyzes the transfer of a phosphate group to glutamate to form L-glutamate 5-phosphate. This chain is Glutamate 5-kinase, found in Methanosarcina barkeri (strain Fusaro / DSM 804).